Here is a 410-residue protein sequence, read N- to C-terminus: Putative competence-damage inducible protein (410 aa).

Belongs to the CinA family.

This is Putative competence-damage inducible protein from Finegoldia magna (strain ATCC 29328 / DSM 20472 / WAL 2508) (Peptostreptococcus magnus).